A 100-amino-acid polypeptide reads, in one-letter code: Cell division protein FtsB (100 aa).

At 1–3 the chain is on the cytoplasmic side; sequence MKQ. A helical membrane pass occupies residues 4–21; that stretch reads LIFLLICLLSLLQYRLWL. Over 22-100 the chain is Periplasmic; it reads GDNNLSEYVL…ELRERNPFNR (79 aa). Residues 49–73 adopt a coiled-coil conformation; sequence RNQILKEEIIDLKRGTEAIEERARN.

This sequence belongs to the FtsB family. Part of a complex composed of FtsB, FtsL and FtsQ.

Its subcellular location is the cell inner membrane. Essential cell division protein. May link together the upstream cell division proteins, which are predominantly cytoplasmic, with the downstream cell division proteins, which are predominantly periplasmic. This Shewanella frigidimarina (strain NCIMB 400) protein is Cell division protein FtsB.